The following is a 284-amino-acid chain: NAD kinase (284 aa).

Asp-70 serves as the catalytic Proton acceptor. NAD(+) contacts are provided by residues 70 to 71 (DG), 139 to 140 (NE), Lys-167, Asp-169, Leu-177, 180 to 185 (TAYNLS), and Gln-236.

This sequence belongs to the NAD kinase family. A divalent metal cation is required as a cofactor.

The protein resides in the cytoplasm. It carries out the reaction NAD(+) + ATP = ADP + NADP(+) + H(+). Involved in the regulation of the intracellular balance of NAD and NADP, and is a key enzyme in the biosynthesis of NADP. Catalyzes specifically the phosphorylation on 2'-hydroxyl of the adenosine moiety of NAD to yield NADP. The polypeptide is NAD kinase (Helicobacter pylori (strain P12)).